The primary structure comprises 464 residues: Glutamyl-tRNA reductase (464 aa).

Substrate contacts are provided by residues 47–50 (TCNR), Ser-145, 150–152 (EPQ), and Gln-156. Cys-48 functions as the Nucleophile in the catalytic mechanism. 225–230 (AAGEMN) contacts NADP(+).

This sequence belongs to the glutamyl-tRNA reductase family. Homodimer.

The catalysed reaction is (S)-4-amino-5-oxopentanoate + tRNA(Glu) + NADP(+) = L-glutamyl-tRNA(Glu) + NADPH + H(+). The protein operates within porphyrin-containing compound metabolism; protoporphyrin-IX biosynthesis; 5-aminolevulinate from L-glutamyl-tRNA(Glu): step 1/2. Catalyzes the NADPH-dependent reduction of glutamyl-tRNA(Glu) to glutamate 1-semialdehyde (GSA). In Psychrobacter cryohalolentis (strain ATCC BAA-1226 / DSM 17306 / VKM B-2378 / K5), this protein is Glutamyl-tRNA reductase.